The primary structure comprises 417 residues: Serine hydroxymethyltransferase (417 aa).

Residues leucine 121 and 125–127 contribute to the (6S)-5,6,7,8-tetrahydrofolate site; that span reads GHL. Position 230 is an N6-(pyridoxal phosphate)lysine (lysine 230). Glutamate 245 is a (6S)-5,6,7,8-tetrahydrofolate binding site.

Belongs to the SHMT family. As to quaternary structure, homodimer. The cofactor is pyridoxal 5'-phosphate.

It is found in the cytoplasm. It carries out the reaction (6R)-5,10-methylene-5,6,7,8-tetrahydrofolate + glycine + H2O = (6S)-5,6,7,8-tetrahydrofolate + L-serine. The protein operates within one-carbon metabolism; tetrahydrofolate interconversion. It participates in amino-acid biosynthesis; glycine biosynthesis; glycine from L-serine: step 1/1. Its function is as follows. Catalyzes the reversible interconversion of serine and glycine with tetrahydrofolate (THF) serving as the one-carbon carrier. This reaction serves as the major source of one-carbon groups required for the biosynthesis of purines, thymidylate, methionine, and other important biomolecules. Also exhibits THF-independent aldolase activity toward beta-hydroxyamino acids, producing glycine and aldehydes, via a retro-aldol mechanism. This chain is Serine hydroxymethyltransferase, found in Desulfitobacterium hafniense (strain DSM 10664 / DCB-2).